Reading from the N-terminus, the 162-residue chain is uncharacterized protein (162 aa).

The first 34 residues, 1-34 (MAREVISTSILMIATVVAVTAAIMVILPAVKDLA), serve as a signal peptide directing secretion.

This is an uncharacterized protein from Archaeoglobus fulgidus (strain ATCC 49558 / DSM 4304 / JCM 9628 / NBRC 100126 / VC-16).